A 291-amino-acid chain; its full sequence is Undecaprenyl-diphosphatase 2 (291 aa).

6 helical membrane-spanning segments follow: residues 39–59, 85–105, 118–138, 198–218, 231–251, and 262–282; these read PGAA…LIYF, ARMG…GLTL, ITAT…RMAA, AARY…VFEL, PTLF…AWFM, and FVWY…VGVL.

Belongs to the UppP family.

Its subcellular location is the cell membrane. The enzyme catalyses di-trans,octa-cis-undecaprenyl diphosphate + H2O = di-trans,octa-cis-undecaprenyl phosphate + phosphate + H(+). In terms of biological role, catalyzes the dephosphorylation of undecaprenyl diphosphate (UPP). Confers resistance to bacitracin. The chain is Undecaprenyl-diphosphatase 2 from Streptomyces coelicolor (strain ATCC BAA-471 / A3(2) / M145).